The sequence spans 163 residues: uncharacterized protein (163 aa).

Residues 144-163 form a disordered region; it reads WSHSQSQLGTPGRGKGALGF. A compositionally biased stretch (gly residues) spans 154-163; that stretch reads PGRGKGALGF.

This is an uncharacterized protein from Homo sapiens (Human).